The sequence spans 293 residues: NAD kinase (293 aa).

Asp72 acts as the Proton acceptor in catalysis. Residues 72–73 (DG), 146–147 (ND), Arg157, Arg174, Asp176, 187–192 (TAYALS), and Gln247 contribute to the NAD(+) site.

This sequence belongs to the NAD kinase family. A divalent metal cation is required as a cofactor.

Its subcellular location is the cytoplasm. The enzyme catalyses NAD(+) + ATP = ADP + NADP(+) + H(+). In terms of biological role, involved in the regulation of the intracellular balance of NAD and NADP, and is a key enzyme in the biosynthesis of NADP. Catalyzes specifically the phosphorylation on 2'-hydroxyl of the adenosine moiety of NAD to yield NADP. The chain is NAD kinase from Teredinibacter turnerae (strain ATCC 39867 / T7901).